Reading from the N-terminus, the 283-residue chain is Peroxisomal protein 2 (283 aa).

The Peroxisomal target signal 1 (PTS1) signature appears at 281–283 (VKL).

Belongs to the PXP2 family.

It localises to the peroxisome matrix. It is found in the cytoplasm. Its subcellular location is the cytosol. Probably involved in peroxisome formation or maintenance as well as in amino acid metabolism. This Saccharomyces cerevisiae (strain ATCC 204508 / S288c) (Baker's yeast) protein is Peroxisomal protein 2.